A 406-amino-acid polypeptide reads, in one-letter code: GTPase Obg (406 aa).

In terms of domain architecture, Obg spans 1-159 (MKFVDEVSIH…RDLKLELKVL (159 aa)). Positions 127-148 (NTRFKSSTNRAPRQTTPGKPGE) are disordered. Residues 129–143 (RFKSSTNRAPRQTTP) are compositionally biased toward polar residues. Positions 160-334 (ADVGLLGLPN…LSQDIMRYLD (175 aa)) constitute an OBG-type G domain. GTP contacts are provided by residues 166-173 (GLPNAGKS), 191-195 (FTTLV), 213-216 (DIPG), 283-286 (NKMD), and 315-317 (SAL). Mg(2+)-binding residues include Ser-173 and Thr-193. The disordered stretch occupies residues 382–406 (AGAVDDDDFDDEEDDGDGPEIFYVP). Over residues 385–399 (VDDDDFDDEEDDGDG) the composition is skewed to acidic residues.

It belongs to the TRAFAC class OBG-HflX-like GTPase superfamily. OBG GTPase family. Monomer. Mg(2+) serves as cofactor.

Its subcellular location is the cytoplasm. In terms of biological role, an essential GTPase which binds GTP, GDP and possibly (p)ppGpp with moderate affinity, with high nucleotide exchange rates and a fairly low GTP hydrolysis rate. Plays a role in control of the cell cycle, stress response, ribosome biogenesis and in those bacteria that undergo differentiation, in morphogenesis control. This Pseudomonas aeruginosa (strain LESB58) protein is GTPase Obg.